The primary structure comprises 94 residues: Co-chaperonin GroES (94 aa).

Belongs to the GroES chaperonin family. In terms of assembly, heptamer of 7 subunits arranged in a ring. Interacts with the chaperonin GroEL.

It localises to the cytoplasm. Its function is as follows. Together with the chaperonin GroEL, plays an essential role in assisting protein folding. The GroEL-GroES system forms a nano-cage that allows encapsulation of the non-native substrate proteins and provides a physical environment optimized to promote and accelerate protein folding. GroES binds to the apical surface of the GroEL ring, thereby capping the opening of the GroEL channel. This Clostridioides difficile (Peptoclostridium difficile) protein is Co-chaperonin GroES.